The chain runs to 388 residues: Processive diacylglycerol beta-glucosyltransferase (388 aa).

This sequence belongs to the glycosyltransferase 28 family. UgtP subfamily.

The protein resides in the cell membrane. It catalyses the reaction a 1,2-diacyl-3-O-(beta-D-glucopyranosyl)-sn-glycerol + UDP-alpha-D-glucose = a 1,2-diacyl-3-O-(beta-D-Glc-(1-&gt;6)-beta-D-Glc)-sn-glycerol + UDP + H(+). The enzyme catalyses a 1,2-diacyl-3-O-(beta-D-Glc-(1-&gt;6)-beta-D-Glc)-sn-glycerol + UDP-alpha-D-glucose = a 1,2-diacyl-3-O-(beta-D-Glc-(1-&gt;6)-beta-D-Glc-(1-&gt;6)-beta-D-Glc)-sn-glycerol + UDP + H(+). The catalysed reaction is a 1,2-diacyl-sn-glycerol + UDP-alpha-D-glucose = a 1,2-diacyl-3-O-(beta-D-glucopyranosyl)-sn-glycerol + UDP + H(+). It participates in glycolipid metabolism; diglucosyl-diacylglycerol biosynthesis. In terms of biological role, processive glucosyltransferase involved in the biosynthesis of both the bilayer- and non-bilayer-forming membrane glucolipids. Is able to successively transfer up to three glucosyl residues to diacylglycerol (DAG), thereby catalyzing the formation of beta-monoglucosyl-DAG (3-O-(beta-D-glucopyranosyl)-1,2-diacyl-sn-glycerol), beta-diglucosyl-DAG (3-O-(beta-D-glucopyranosyl-beta-(1-&gt;6)-D-glucopyranosyl)-1,2-diacyl-sn-glycerol) and beta-triglucosyl-DAG (3-O-(beta-D-glucopyranosyl-beta-(1-&gt;6)-D-glucopyranosyl-beta-(1-&gt;6)-D-glucopyranosyl)-1,2-diacyl-sn-glycerol). Beta-diglucosyl-DAG is the predominant glycolipid found in Bacillales and is also used as a membrane anchor for lipoteichoic acid (LTA). The protein is Processive diacylglycerol beta-glucosyltransferase of Bacillus anthracis (strain A0248).